We begin with the raw amino-acid sequence, 839 residues long: Lon protease (839 aa).

Residues L31–I224 form the Lon N-terminal domain. An ATP-binding site is contributed by G377–T384. Positions A613–E790 constitute a Lon proteolytic domain. Residues S696 and K739 contribute to the active site. A disordered region spans residues I807–K839. Positions K823–K832 are enriched in low complexity.

This sequence belongs to the peptidase S16 family. As to quaternary structure, homohexamer. Organized in a ring with a central cavity.

The protein localises to the cytoplasm. The catalysed reaction is Hydrolysis of proteins in presence of ATP.. Functionally, ATP-dependent serine protease that mediates the selective degradation of mutant and abnormal proteins as well as certain short-lived regulatory proteins. Required for cellular homeostasis and for survival from DNA damage and developmental changes induced by stress. Degrades polypeptides processively to yield small peptide fragments that are 5 to 10 amino acids long. Binds to DNA in a double-stranded, site-specific manner. This is Lon protease from Leptospira interrogans serogroup Icterohaemorrhagiae serovar copenhageni (strain Fiocruz L1-130).